Reading from the N-terminus, the 335-residue chain is Homeobox protein DBX1 (335 aa).

Disordered stretches follow at residues 56–102 and 240–335; these read RSIP…LSPA and KERE…ITVS. The segment covering 83–95 has biased composition (low complexity); the sequence is GSPGSGSRRGSSP. The homeobox DNA-binding region spans 181–240; it reads GMLRRAVFSDVQRKALEKTFQKQKYISKPDRKKLASKLGLKDSQVKIWFQNRRMKWRNSK. The span at 299–317 shows a compositional bias: low complexity; sequence GPLPASPAHSSSPGKPSDF. Residues 318-335 are compositionally biased toward acidic residues; sequence SDSDEDEEGEEDEEITVS.

Belongs to the H2.0 homeobox family.

It localises to the nucleus. In terms of biological role, could have a role in patterning the central nervous system during embryogenesis. Has a key role in regulating the distinct phenotypic features that distinguish two major classes of ventral interneurons, V0 and V1 neurons. Regulates the transcription factor profile, neurotransmitter phenotype, intraspinal migratory path and axonal trajectory of V0 neurons, features that differentiate them from an adjacent set of V1 neurons. This is Homeobox protein DBX1 (Dbx1) from Rattus norvegicus (Rat).